We begin with the raw amino-acid sequence, 211 residues long: Dephospho-CoA kinase (211 aa).

Residues 2–204 enclose the DPCK domain; the sequence is IIGLTGSIGM…SGVRRWRRGK (203 aa). 10 to 15 provides a ligand contact to ATP; it reads GMGKST.

It belongs to the CoaE family.

It localises to the cytoplasm. It carries out the reaction 3'-dephospho-CoA + ATP = ADP + CoA + H(+). It functions in the pathway cofactor biosynthesis; coenzyme A biosynthesis; CoA from (R)-pantothenate: step 5/5. Catalyzes the phosphorylation of the 3'-hydroxyl group of dephosphocoenzyme A to form coenzyme A. In Rhodospirillum rubrum (strain ATCC 11170 / ATH 1.1.1 / DSM 467 / LMG 4362 / NCIMB 8255 / S1), this protein is Dephospho-CoA kinase.